The chain runs to 266 residues: Putative carbamate hydrolase RutD (266 aa).

Positions 14–115 (PVVVLISGLG…TMLVSVNGWL (102 aa)) constitute an AB hydrolase-1 domain.

Belongs to the AB hydrolase superfamily. Hydrolase RutD family.

The enzyme catalyses carbamate + 2 H(+) = NH4(+) + CO2. Functionally, involved in pyrimidine catabolism. May facilitate the hydrolysis of carbamate, a reaction that can also occur spontaneously. This is Putative carbamate hydrolase RutD from Shigella flexneri serotype X (strain 2002017).